Here is a 311-residue protein sequence, read N- to C-terminus: HTH-type transcriptional regulator DsdC (311 aa).

One can recognise an HTH lysR-type domain in the interval 15-72; sequence WQLSKMHTFEVAARHQSFALAAEELSLSPSAVSHRINQLEEELGIQLFVRSHRKVELT. Positions 32–51 form a DNA-binding region, H-T-H motif; it reads FALAAEELSLSPSAVSHRIN.

It belongs to the LysR transcriptional regulatory family.

In terms of biological role, regulates the expression of the dsdX-dsdA operon. The protein is HTH-type transcriptional regulator DsdC of Escherichia coli (strain K12).